A 246-amino-acid chain; its full sequence is Exosome complex component Rrp41 (246 aa).

This sequence belongs to the RNase PH family. Rrp41 subfamily. Component of the archaeal exosome complex. Forms a hexameric ring-like arrangement composed of 3 Rrp41-Rrp42 heterodimers. The hexameric ring associates with a trimer of Rrp4 and/or Csl4 subunits.

It localises to the cytoplasm. Catalytic component of the exosome, which is a complex involved in RNA degradation. Has 3'-&gt;5' exoribonuclease activity. Can also synthesize heteromeric RNA-tails. The sequence is that of Exosome complex component Rrp41 from Pyrobaculum neutrophilum (strain DSM 2338 / JCM 9278 / NBRC 100436 / V24Sta) (Thermoproteus neutrophilus).